The sequence spans 488 residues: 3-octaprenyl-4-hydroxybenzoate carboxy-lyase (488 aa).

Asparagine 172 serves as a coordination point for Mn(2+). Residues 175-177 (IYR), 189-191 (RWL), and 194-195 (RG) contribute to the prenylated FMN site. Glutamate 238 serves as a coordination point for Mn(2+). Catalysis depends on aspartate 287, which acts as the Proton donor.

The protein belongs to the UbiD family. As to quaternary structure, homohexamer. The cofactor is prenylated FMN. Mn(2+) is required as a cofactor.

Its subcellular location is the cell membrane. It catalyses the reaction a 4-hydroxy-3-(all-trans-polyprenyl)benzoate + H(+) = a 2-(all-trans-polyprenyl)phenol + CO2. The protein operates within cofactor biosynthesis; ubiquinone biosynthesis. Functionally, catalyzes the decarboxylation of 3-octaprenyl-4-hydroxy benzoate to 2-octaprenylphenol, an intermediate step in ubiquinone biosynthesis. In Pseudomonas putida (strain W619), this protein is 3-octaprenyl-4-hydroxybenzoate carboxy-lyase.